A 384-amino-acid chain; its full sequence is Sphingosine 1-phosphate receptor 3 (384 aa).

The Extracellular segment spans residues 1-34 (MMINPLIYLHYNYTGKLDHRPTVGTSPGTRDPKT). N12 carries N-linked (GlcNAc...) asparagine glycosylation. Residues 35 to 55 (IAFLVVCSFIILENLTVLLAI) form a helical membrane-spanning segment. Topologically, residues 56–64 (WKNHRFHNR) are cytoplasmic. The helical transmembrane segment at 65–85 (MYFFIGNLALCDLLASVAYLV) threads the bilayer. Topologically, residues 86 to 105 (NLLLSGEKTLQLSPVLWFVR) are extracellular. The chain crosses the membrane as a helical span at residues 106–126 (EGSMFVTLGASIFSLLAIAIE). Over 127–144 (RHLTMIKMRPYDASKNYR) the chain is Cytoplasmic. The helical transmembrane segment at 145–165 (VFLLIGTCWLVAVLLGALPIL) threads the bilayer. The Extracellular segment spans residues 166 to 186 (GWNCLGNLPDCSTILPLYTKK). Residues 187-207 (YVAFCIIVFIVLLLAMSVLYA) traverse the membrane as a helical segment. The Cytoplasmic segment spans residues 208–235 (RIYILVKSSSQKVSKHRNSEHAMSLLRT). The helical transmembrane segment at 236 to 256 (VIIVVGVFIACWMPIFVLLLL) threads the bilayer. Residues 257–271 (DVACERPCPILYKAD) lie on the Extracellular side of the membrane. A helical membrane pass occupies residues 272–292 (WFIAVAVLNSAMNPIIYTLAS). Over 293-384 (REMRRAFLGL…REGEGGNGGR (92 aa)) the chain is Cytoplasmic. 2 stretches are compositionally biased toward polar residues: residues 315–325 (NDSGNKQFQEP) and 336–347 (QTHPNQSQQSSR). Residues 315–384 (NDSGNKQFQE…REGEGGNGGR (70 aa)) form a disordered region. Positions 349-359 (AELDREQETGH) are enriched in basic and acidic residues.

This sequence belongs to the G-protein coupled receptor 1 family.

It is found in the cell membrane. In terms of biological role, receptor for the lysosphingolipid sphingosine 1-phosphate (S1P). The sequence is that of Sphingosine 1-phosphate receptor 3 (s1pr3) from Takifugu rubripes (Japanese pufferfish).